A 463-amino-acid chain; its full sequence is Cysteine--tRNA ligase (463 aa).

Residue Cys29 participates in Zn(2+) binding. Residues 31 to 41 (PTVYDFAHIGN) carry the 'HIGH' region motif. Cys227, His252, and Glu256 together coordinate Zn(2+). Positions 285–289 (KMSKS) match the 'KMSKS' region motif. Lys288 serves as a coordination point for ATP.

This sequence belongs to the class-I aminoacyl-tRNA synthetase family. In terms of assembly, monomer. Requires Zn(2+) as cofactor.

It localises to the cytoplasm. The catalysed reaction is tRNA(Cys) + L-cysteine + ATP = L-cysteinyl-tRNA(Cys) + AMP + diphosphate. This Rhodopseudomonas palustris (strain BisB5) protein is Cysteine--tRNA ligase.